The sequence spans 125 residues: NADPH-dependent 7-cyano-7-deazaguanine reductase (125 aa).

Cys-40 (thioimide intermediate) is an active-site residue. Catalysis depends on Asp-47, which acts as the Proton donor. Substrate contacts are provided by residues 62-64 and 81-82; these read LET and HE.

The protein belongs to the GTP cyclohydrolase I family. QueF type 1 subfamily.

It is found in the cytoplasm. It carries out the reaction 7-aminomethyl-7-carbaguanine + 2 NADP(+) = 7-cyano-7-deazaguanine + 2 NADPH + 3 H(+). It participates in tRNA modification; tRNA-queuosine biosynthesis. Functionally, catalyzes the NADPH-dependent reduction of 7-cyano-7-deazaguanine (preQ0) to 7-aminomethyl-7-deazaguanine (preQ1). The sequence is that of NADPH-dependent 7-cyano-7-deazaguanine reductase from Frankia casuarinae (strain DSM 45818 / CECT 9043 / HFP020203 / CcI3).